The primary structure comprises 458 residues: UDP-N-acetylglucosamine 1-carboxyvinyltransferase (458 aa).

34–35 (KN) is a phosphoenolpyruvate binding site. R104 serves as a coordination point for UDP-N-acetyl-alpha-D-glucosamine. The active-site Proton donor is C128. Residue C128 is modified to 2-(S-cysteinyl)pyruvic acid O-phosphothioketal. D320 and V342 together coordinate UDP-N-acetyl-alpha-D-glucosamine.

It belongs to the EPSP synthase family. MurA subfamily.

The protein resides in the cytoplasm. It catalyses the reaction phosphoenolpyruvate + UDP-N-acetyl-alpha-D-glucosamine = UDP-N-acetyl-3-O-(1-carboxyvinyl)-alpha-D-glucosamine + phosphate. Its pathway is cell wall biogenesis; peptidoglycan biosynthesis. Its function is as follows. Cell wall formation. Adds enolpyruvyl to UDP-N-acetylglucosamine. The protein is UDP-N-acetylglucosamine 1-carboxyvinyltransferase of Prochlorococcus marinus (strain NATL1A).